The chain runs to 139 residues: MKLTQGAFSFLPDLTDAQVTKQIQYALNKSWAISIEYTDDPHPRNSYWEMWGLPLFDVKDPAAILFEINMARKAKPNYYLKIACFDNTRGIESCVLSFIVQRPSYEPGFKMTRQEVKGRQLVYTLESYSVDAKPEGERY.

It belongs to the RuBisCO small chain family. As to quaternary structure, heterohexadecamer of 8 large and 8 small subunits.

It localises to the plastid. The protein resides in the chloroplast. Its function is as follows. RuBisCO catalyzes two reactions: the carboxylation of D-ribulose 1,5-bisphosphate, the primary event in carbon dioxide fixation, as well as the oxidative fragmentation of the pentose substrate in the photorespiration process. Both reactions occur simultaneously and in competition at the same active site. Although the small subunit is not catalytic it is essential for maximal activity. This chain is Ribulose bisphosphate carboxylase small subunit, found in Chrysotila carterae (Marine alga).